The following is a 419-amino-acid chain: MSMLEQMGKAAKQASWQLAMLSTAKKNQALAVIANLLESESQAILQANEQDMAAARDSGMSEALLDRLLLSPARLAAIANDVRQVCRLNDPVGRVIDGSLLDSGLKLERRRVPLGVIGVIYEARPNVTIDVASLCLKTGNAVILRGGKETHHTNQATVKVIQQALEQCGLPPAAVQAIESPDRELVTQLLRMDNYIDMLIPRGGAGLHKLCREQSTIPVITGGIGVCHTFVDESADFEKALLVIENAKIQRPSACNSLETLLVHQEIAARFLPILSDRMHAFGVTLHASPQAMPFLAEGKARVVAVEAADYDDEWLSLDLNVEIVADINAAISHIREHGTSHSDAILTRSLGNAEHFVRAVDSSAVYVNASTRFTDGGQFGLGAEVAVSTQKLHARGPMGLDALTTYKWIGYGDDLVRS.

Belongs to the gamma-glutamyl phosphate reductase family.

The protein resides in the cytoplasm. It carries out the reaction L-glutamate 5-semialdehyde + phosphate + NADP(+) = L-glutamyl 5-phosphate + NADPH + H(+). Its pathway is amino-acid biosynthesis; L-proline biosynthesis; L-glutamate 5-semialdehyde from L-glutamate: step 2/2. Its function is as follows. Catalyzes the NADPH-dependent reduction of L-glutamate 5-phosphate into L-glutamate 5-semialdehyde and phosphate. The product spontaneously undergoes cyclization to form 1-pyrroline-5-carboxylate. The protein is Gamma-glutamyl phosphate reductase of Yersinia enterocolitica serotype O:8 / biotype 1B (strain NCTC 13174 / 8081).